A 1218-amino-acid polypeptide reads, in one-letter code: Probable cation-transporting ATPase 13A5 (1218 aa).

Transmembrane regions (helical) follow at residues 33 to 53 (KAFC…VFYW), 222 to 242 (GYIE…VLSV), 401 to 421 (FIVF…GVYM), and 433 to 453 (MALI…LTIG). D486 (4-aspartylphosphate intermediate) is an active-site residue. Residues N540, N669, and N819 are each glycosylated (N-linked (GlcNAc...) asparagine). Residues D850 and D854 each contribute to the Mg(2+) site. The next 6 membrane-spanning stretches (helical) occupy residues 903-923 (FGVF…ALLL), 940-956 (VAIT…THAY), 973-993 (LLLS…SAFL), 1042-1062 (FETT…AFIF), 1077-1097 (IFSF…FSDF), and 1115-1135 (VLIL…EDSI).

This sequence belongs to the cation transport ATPase (P-type) (TC 3.A.3) family. Type V subfamily.

It localises to the membrane. The catalysed reaction is ATP + H2O = ADP + phosphate + H(+). This chain is Probable cation-transporting ATPase 13A5 (ATP13A5), found in Homo sapiens (Human).